Consider the following 854-residue polypeptide: A-kinase anchor protein 4 (854 aa).

The propeptide occupies 1–188 (MMAYSDTTMM…MTAAKNTNNN (188 aa)). 6 positions are modified to phosphoserine: Ser-96, Ser-130, Ser-190, Ser-213, Ser-226, and Ser-272. Residues 184 to 207 (NTNNNQSPSAPPAKPPSTQRAVIS) form a disordered region. The segment at 219–232 (FYVNRLSSLVIQMA) is PKA-RI and PKA-RII subunit binding domain. The tract at residues 287–323 (RGTGEESREGGQKSFLYSELSNKSKSGDKQMSQRESK) is disordered. The span at 288-297 (GTGEESREGG) shows a compositional bias: basic and acidic residues. At Ser-300 the chain carries Phosphoserine. At Tyr-303 the chain carries Phosphotyrosine. 2 positions are modified to phosphoserine: Ser-304 and Ser-307. Residues 311-323 (KSGDKQMSQRESK) show a composition bias toward basic and acidic residues. Positions 336–345 (YANQVASDMM) are PKA-RI-alpha subunit binding domain. Ser-342, Ser-432, Ser-443, Ser-445, Ser-447, Ser-450, Ser-464, and Ser-492 each carry phosphoserine. Position 506 is a phosphothreonine (Thr-506). Phosphoserine occurs at positions 536, 581, 627, and 703.

Belongs to the AKAP110 family. Interacts with PRKAR1A and PRKAR2A. Interacts with ENO4. Interacts with QRICH2. In terms of processing, phosphorylated by STK33 during sperm flagella assembly. In terms of tissue distribution, testis specific; only expressed in round spermatids.

It localises to the cell projection. The protein resides in the cilium. Its subcellular location is the flagellum. Its function is as follows. Major structural component of sperm fibrous sheath. Plays a role in sperm motility. This is A-kinase anchor protein 4 from Homo sapiens (Human).